A 317-amino-acid polypeptide reads, in one-letter code: Protease 7 (317 aa).

Positions 1–20 (MRAKLLGIVLTTPIAISSFA) are cleaved as a signal peptide. At 21 to 31 (STETLSFTPDN) the chain is on the periplasmic side. The beta stranded transmembrane segment at 32-41 (INADISLGTL) threads the bilayer. Topologically, residues 42 to 69 (SGKTKERVYLAEEGGRKVSQLDWKFNNA) are extracellular. The chain crosses the membrane as a beta stranded span at residues 70–78 (AIIKGAINW). Topologically, residues 79–83 (DLMPQ) are periplasmic. A beta stranded transmembrane segment spans residues 84–92 (ISIGAAGWT). Residues 93–130 (TLGSRGGNMVDQDWMDSSNPGTWTDESRHPDTQLNYAN) lie on the Extracellular side of the membrane. Residues Asp103 and Asp105 contribute to the active site. Residues 131–140 (EFDLNIKGWL) traverse the membrane as a beta stranded segment. Over 141-145 (LNEPN) the chain is Periplasmic. A beta stranded membrane pass occupies residues 146–156 (YRLGLMAGYQE). Topologically, residues 157–197 (SRYSFTARGGSYIYSSEEGFRDDIGSFPNGERAIGYKQRFK) are extracellular. Residues 198-209 (MPYIGLTGSYRY) form a beta stranded membrane-spanning segment. The Periplasmic portion of the chain corresponds to 210 to 211 (ED). The chain crosses the membrane as a beta stranded span at residues 212–221 (FELGGTFKYS). At 222 to 250 (GWVEASDNDEHYDPGKRITYRSKVKDQNY) the chain is on the extracellular side. Active-site residues include Asp230 and His232. The beta stranded transmembrane segment at 251-261 (YSVSVNAGYYV) threads the bilayer. Topologically, residues 262–264 (TPN) are periplasmic. The chain crosses the membrane as a beta stranded span at residues 265–274 (AKVYVEGTWN). The Extracellular segment spans residues 275–306 (RVTNKKGNTSLYDHNDNTSDYSKNGAGIENYN). Residues 307-316 (FITTAGLKYT) form a beta stranded membrane-spanning segment. Position 317 (Phe317) is a topological domain, periplasmic.

Belongs to the peptidase A26 family. Homopentamer.

Its subcellular location is the cell outer membrane. It carries out the reaction Has a virtual requirement for Arg in the P1 position and a slightly less stringent preference for this residue in the P1' position, which can also contain Lys, Gly or Val.. Inhibited by zinc. Protease that can cleave T7 RNA polymerase, ferric enterobactin receptor protein (FEP), antimicrobial peptide protamine and other proteins. This protease has a specificity for paired basic residues. The protein is Protease 7 (ompT) of Escherichia coli O157:H7.